We begin with the raw amino-acid sequence, 132 residues long: Antimicrobial protein Ace-AMP1 (132 aa).

The N-terminal stretch at 1–27 (MVRVVSLLAASTFILLIMIISSPYANS) is a signal peptide. 4 disulfide bridges follow: Cys-31/Cys-76, Cys-41/Cys-54, Cys-55/Cys-100, and Cys-74/Cys-116.

Belongs to the plant LTP family. Highly divergent. Monomer.

Functionally, antifungal and antibacterial activity against the Gram-positive bacteria B.megaterium and S.lutea. This Allium cepa (Onion) protein is Antimicrobial protein Ace-AMP1.